Here is a 253-residue protein sequence, read N- to C-terminus: Ribosome maturation protein SBDS (253 aa).

It belongs to the SDO1/SBDS family. Associates with the 60S ribosomal subunit.

The protein resides in the cytoplasm. It is found in the nucleus. Its subcellular location is the nucleolus. The protein localises to the nucleoplasm. It localises to the cytoskeleton. The protein resides in the spindle. Its function is as follows. Required for the assembly of mature ribosomes and ribosome biogenesis. Together with K10C3.5b/EFL1, triggers the GTP-dependent release of ribosome maturation factors from 60S pre-ribosomes in the cytoplasm, thereby activating ribosomes for translation competence by allowing 80S ribosome assembly. Required for normal levels of protein synthesis. May play a role in cellular stress resistance. May play a role in cellular response to DNA damage. May play a role in cell proliferation. This is Ribosome maturation protein SBDS (sbds-1) from Caenorhabditis elegans.